A 661-amino-acid chain; its full sequence is Sorting nexin-4 (661 aa).

Polar residues-rich tracts occupy residues methionine 1–tryptophan 10 and histidine 26–asparagine 36. Disordered stretches follow at residues methionine 1–aspartate 49 and threonine 56–arginine 75. The span at isoleucine 38–aspartate 49 shows a compositional bias: acidic residues. A compositionally biased stretch (polar residues) spans threonine 56–glutamate 70. The PX domain occupies valine 77–tryptophan 198. A 1,2-diacyl-sn-glycero-3-phospho-(1D-myo-inositol-3-phosphate) is bound by residues arginine 120, serine 122, lysine 146, and arginine 165. The segment covering leucine 554–glutamine 572 has biased composition (basic and acidic residues). A disordered region spans residues leucine 554 to tryptophan 661. Residues alanine 624–glutamine 640 are compositionally biased toward polar residues. A compositionally biased stretch (acidic residues) spans aspartate 645 to tryptophan 661.

Belongs to the sorting nexin family.

The protein resides in the cytoplasm. It localises to the membrane. It is found in the vacuole membrane. Functionally, sorting nexin involved in the separation or division of vacuoles throughout the entire life cycle of the cells. Required for glucose-induced micropexophagy and ethanol-induced macropexophagy. Involved in the fusion between the pexophagosome and the vacuole. Also involved in the separation or division of vacuoles throughout the entire life cycle of the cells. This chain is Sorting nexin-4 (SNX4), found in Komagataella pastoris (Yeast).